Consider the following 162-residue polypeptide: Putative 4-hydroxy-4-methyl-2-oxoglutarate aldolase (162 aa).

Substrate-binding positions include 75-78 (GDML) and Arg97. Residue Asp98 participates in a divalent metal cation binding.

It belongs to the class II aldolase/RraA-like family. Homotrimer. A divalent metal cation is required as a cofactor.

The enzyme catalyses 4-hydroxy-4-methyl-2-oxoglutarate = 2 pyruvate. It catalyses the reaction oxaloacetate + H(+) = pyruvate + CO2. Its function is as follows. Catalyzes the aldol cleavage of 4-hydroxy-4-methyl-2-oxoglutarate (HMG) into 2 molecules of pyruvate. Also contains a secondary oxaloacetate (OAA) decarboxylase activity due to the common pyruvate enolate transition state formed following C-C bond cleavage in the retro-aldol and decarboxylation reactions. In Pseudomonas paraeruginosa (strain DSM 24068 / PA7) (Pseudomonas aeruginosa (strain PA7)), this protein is Putative 4-hydroxy-4-methyl-2-oxoglutarate aldolase.